Reading from the N-terminus, the 420-residue chain is Tyrosine--tRNA ligase (420 aa).

Position 36 (Y36) interacts with L-tyrosine. A 'HIGH' region motif is present at residues 41 to 50; sequence PTADSMHIGH. 2 residues coordinate L-tyrosine: Y170 and Q174. Residues 231–235 carry the 'KMSKS' region motif; the sequence is KFGKS. ATP is bound at residue K234. Residues 353–420 form the S4 RNA-binding domain; that stretch reads TNIVDFIVEA…KKKYFMVKYK (68 aa).

The protein belongs to the class-I aminoacyl-tRNA synthetase family. TyrS type 1 subfamily. As to quaternary structure, homodimer.

It is found in the cytoplasm. It catalyses the reaction tRNA(Tyr) + L-tyrosine + ATP = L-tyrosyl-tRNA(Tyr) + AMP + diphosphate + H(+). Functionally, catalyzes the attachment of tyrosine to tRNA(Tyr) in a two-step reaction: tyrosine is first activated by ATP to form Tyr-AMP and then transferred to the acceptor end of tRNA(Tyr). The sequence is that of Tyrosine--tRNA ligase from Staphylococcus carnosus (strain TM300).